The chain runs to 353 residues: Photosystem II protein D1 (353 aa).

Thr-2 bears the N-acetylthreonine mark. Residue Thr-2 is modified to Phosphothreonine. A run of 3 helical transmembrane segments spans residues 29–46 (YIGW…TATS), 118–133 (HFLL…EWEL), and 142–156 (WIAV…AATA). His-118 contributes to the chlorophyll a binding site. Tyr-126 serves as a coordination point for pheophytin a. [CaMn4O5] cluster-binding residues include Asp-170 and Glu-189. The helical transmembrane segment at 197–218 (FHMLGVAGVFGGSLFSAMHGSL) threads the bilayer. Position 198 (His-198) interacts with chlorophyll a. A quinone-binding positions include His-215 and 264–265 (SF). His-215 lines the Fe cation pocket. A Fe cation-binding site is contributed by His-272. Residues 274–288 (FLAAWPVAGIWFTAL) traverse the membrane as a helical segment. [CaMn4O5] cluster-binding residues include His-332, Glu-333, Asp-342, and Ala-344. The propeptide occupies 345–353 (AVESISIGG).

The protein belongs to the reaction center PufL/M/PsbA/D family. As to quaternary structure, PSII is composed of 1 copy each of membrane proteins PsbA, PsbB, PsbC, PsbD, PsbE, PsbF, PsbH, PsbI, PsbJ, PsbK, PsbL, PsbM, PsbT, PsbX, PsbY, PsbZ, Psb30/Ycf12, at least 3 peripheral proteins of the oxygen-evolving complex and a large number of cofactors. It forms dimeric complexes. The D1/D2 heterodimer binds P680, chlorophylls that are the primary electron donor of PSII, and subsequent electron acceptors. It shares a non-heme iron and each subunit binds pheophytin, quinone, additional chlorophylls, carotenoids and lipids. D1 provides most of the ligands for the Mn4-Ca-O5 cluster of the oxygen-evolving complex (OEC). There is also a Cl(-1) ion associated with D1 and D2, which is required for oxygen evolution. The PSII complex binds additional chlorophylls, carotenoids and specific lipids. serves as cofactor. Post-translationally, tyr-161 forms a radical intermediate that is referred to as redox-active TyrZ, YZ or Y-Z. In terms of processing, C-terminally processed by CTPA; processing is essential to allow assembly of the oxygen-evolving complex and thus photosynthetic growth.

It localises to the plastid. The protein resides in the chloroplast thylakoid membrane. It carries out the reaction 2 a plastoquinone + 4 hnu + 2 H2O = 2 a plastoquinol + O2. In terms of biological role, photosystem II (PSII) is a light-driven water:plastoquinone oxidoreductase that uses light energy to abstract electrons from H(2)O, generating O(2) and a proton gradient subsequently used for ATP formation. It consists of a core antenna complex that captures photons, and an electron transfer chain that converts photonic excitation into a charge separation. The D1/D2 (PsbA/PsbD) reaction center heterodimer binds P680, the primary electron donor of PSII as well as several subsequent electron acceptors. The protein is Photosystem II protein D1 of Pinus koraiensis (Korean pine).